The primary structure comprises 415 residues: Prostate tumor-overexpressed gene 1 protein homolog (415 aa).

The tract at residues 1-54 is disordered; it reads MVRPRRAPHRSGAGGPLGGRGRPLRPFTARAARSRSWPASPRGPQPPRIRARSA. The span at 12–21 shows a compositional bias: gly residues; the sequence is GAGGPLGGRG. The segment covering 24 to 40 has biased composition (low complexity); sequence LRPFTARAARSRSWPAS. Phosphoserine is present on serine 53. Positions 184 to 415 are interaction with FLOT1; sequence NGFAGCMLFP…QEQQQRGMGG (232 aa).

The protein belongs to the Mediator complex subunit 25 family. PTOV1 subfamily. May interact with CREBBP. Interacts with FLOT1. Ubiquitinated by the CRL2(KLHDC2) complex, which recognizes the diglycine (Gly-Gly) at the C-terminus, leading to its degradation. Ubiquitinated by the CRL2(APPBP2) complex, which recognizes the Arg-Xaa-Xaa-Gly sequence at the C-terminus, leading to its degradation.

It localises to the cytoplasm. It is found in the nucleus. The protein localises to the cell membrane. Its subcellular location is the perinuclear region. In terms of biological role, may activate transcription. Required for nuclear translocation of FLOT1. Promotes cell proliferation. The chain is Prostate tumor-overexpressed gene 1 protein homolog (PTOV1) from Bos taurus (Bovine).